We begin with the raw amino-acid sequence, 465 residues long: Cerebellar degeneration-related protein 2-like (465 aa).

Coiled-coil stretches lie at residues 31–64, 91–142, and 188–266; these read AAELGKTLLERNKELEESLQQMYSTNEEQVHEIE, ARDL…LEQL, and LEQE…YLLA. Residues 282 to 315 are disordered; it reads APEADDPQPGSGDDSNAQDGVSSPAASPSHAVRK. Residues Ser308, Ser318, and Ser344 each carry the phosphoserine modification. Positions 350 to 377 form a coiled coil; sequence MSILREVDEQYHALLEKYEELLSKCRQH. A disordered region spans residues 382-421; the sequence is RHAGVQTSRPISRDSSWRDLLGGEESPGEGKAGEKSLSQH. The residue at position 407 (Ser407) is a Phosphoserine.

This sequence belongs to the CDR2 family.

This is Cerebellar degeneration-related protein 2-like (Cdr2l) from Mus musculus (Mouse).